A 277-amino-acid chain; its full sequence is MSFSSSNFYVILSISLTVFILLFNINKVNSTELTSFTITKFSQDQKNLIFQGNAITTSTGKLQLTKAVKNSIGRALYSAPIHIWDSKTGDVANFETLFTFAITAPYSSNVADGLAFFIAPVDTQPQNIGRAGFLGVFNSETYNKSIQTVAVEIDTFHNTWDPKINRHIGINVNCIKSISTTSWVLENGREANVLVRFDAHTNVLSVVLSYPGLPDSYILSDVVPLKDIVPEWVRIGFSAATGAEFAEHDIRYWSFHSELSLVFNNNNANVSSSVQSA.

The first 30 residues, 1-30 (MSFSSSNFYVILSISLTVFILLFNINKVNS), serve as a signal peptide directing secretion. Residue Asn143 is glycosylated (N-linked (GlcNAc...) asparagine). Residues Glu152 and Asp154 each coordinate Mn(2+). Residues Asp154, Asn158, and Asp161 each contribute to the Ca(2+) site. Residues Asp161 and His167 each coordinate Mn(2+). N-linked (GlcNAc...) asparagine glycosylation occurs at Asn269.

Belongs to the leguminous lectin family.

Lectin that may be involved in a cell recognition process. This is Lectin 1 (LEC1) from Medicago truncatula (Barrel medic).